A 421-amino-acid polypeptide reads, in one-letter code: Anthranilate synthase component 1 (421 aa).

L-tryptophan contacts are provided by residues Ser-31 and 207–209 (PYM). 242-243 (GT) contacts chorismate. Glu-269 serves as a coordination point for Mg(2+). Residues Tyr-357, Arg-377, 391-393 (GAG), and Gly-393 each bind chorismate. Residue Glu-406 participates in Mg(2+) binding.

Belongs to the anthranilate synthase component I family. As to quaternary structure, heterotetramer consisting of two non-identical subunits: a beta subunit (TrpG) and a large alpha subunit (TrpE). It depends on Mg(2+) as a cofactor.

It catalyses the reaction chorismate + L-glutamine = anthranilate + pyruvate + L-glutamate + H(+). The protein operates within amino-acid biosynthesis; L-tryptophan biosynthesis; L-tryptophan from chorismate: step 1/5. Cooperatively feedback inhibited by tryptophan. In terms of biological role, part of a heterotetrameric complex that catalyzes the two-step biosynthesis of anthranilate, an intermediate in the biosynthesis of L-tryptophan. In the first step, the glutamine-binding beta subunit (TrpG) of anthranilate synthase (AS) provides the glutamine amidotransferase activity which generates ammonia as a substrate that, along with chorismate, is used in the second step, catalyzed by the large alpha subunit of AS (TrpE) to produce anthranilate. In the absence of TrpG, TrpE can synthesize anthranilate directly from chorismate and high concentrations of ammonia. This Saccharolobus solfataricus (strain ATCC 35092 / DSM 1617 / JCM 11322 / P2) (Sulfolobus solfataricus) protein is Anthranilate synthase component 1 (trpE).